The following is a 161-amino-acid chain: Lipoprotein signal peptidase (161 aa).

Helical transmembrane passes span 8-28 (LKYFILAILIIAADLYTKYLA), 40-60 (ITSFFNLTLLYNHGAAFSLLS), 67-87 (QMIMFSTISLIAAIVLIYLII), and 91-111 (ITEKINLFSFALILGGALGNF). Active-site residues include aspartate 122 and aspartate 140. The helical transmembrane segment at 136–156 (FNIADSAITCGVVILIAASLF) threads the bilayer.

Belongs to the peptidase A8 family.

The protein localises to the cell inner membrane. The enzyme catalyses Release of signal peptides from bacterial membrane prolipoproteins. Hydrolyzes -Xaa-Yaa-Zaa-|-(S,diacylglyceryl)Cys-, in which Xaa is hydrophobic (preferably Leu), and Yaa (Ala or Ser) and Zaa (Gly or Ala) have small, neutral side chains.. Its pathway is protein modification; lipoprotein biosynthesis (signal peptide cleavage). Functionally, this protein specifically catalyzes the removal of signal peptides from prolipoproteins. The chain is Lipoprotein signal peptidase from Francisella tularensis subsp. tularensis (strain FSC 198).